The primary structure comprises 200 residues: Probable molybdenum cofactor guanylyltransferase (200 aa).

GTP is bound by residues 9–11 (LAG), Lys21, Asp69, and Asp100. Position 100 (Asp100) interacts with Mg(2+).

It belongs to the MobA family. Requires Mg(2+) as cofactor.

The protein localises to the cytoplasm. The catalysed reaction is Mo-molybdopterin + GTP + H(+) = Mo-molybdopterin guanine dinucleotide + diphosphate. Its function is as follows. Transfers a GMP moiety from GTP to Mo-molybdopterin (Mo-MPT) cofactor (Moco or molybdenum cofactor) to form Mo-molybdopterin guanine dinucleotide (Mo-MGD) cofactor. The sequence is that of Probable molybdenum cofactor guanylyltransferase from Bacillus cereus (strain ATCC 10987 / NRS 248).